Consider the following 433-residue polypeptide: MSFPKELEKVLEITKAQNVWRRTQTLNLIASENVMSPLAESVYMSDFMSRYAEGKPYKRYYQGTKYTDEIETLAMDLMNEITNSKDCDLRPTSGTIANAAVFRVLAEPGDKALIAPVQAGAHVSHTKFGTLGALGIQHIEMPFDEENINVDVDKAIKMIEEVKPKFVVLGGSLYLFPHPTKELAPHVHAVGAKLVYDAAHVYGLIEGKVWSSPLKEGADIMTVSTHKTFPGPQGGAIFSDGSEVFKQVSRTIFPWFVSNHHLHRLPATAVTAIEMKYFGESYANQITRNSKALAEALAERGFKVIGENLGYTKSHQVAVDVRQFGGGNKIAKLLEDANIIVNKNLLPYDKPENVSDPSGLRIGVQEMTRYGMKESEMEEIAELFKKVIIDKKDVNKVKKEVIDMRKNFLEVKYTFDDMKDLEKYSSKSLKLII.

121–123 lines the (6S)-5,6,7,8-tetrahydrofolate pocket; that stretch reads AHV. Position 227 is an N6-(pyridoxal phosphate)lysine (lysine 227). Glutamate 243 is a (6S)-5,6,7,8-tetrahydrofolate binding site.

It belongs to the SHMT family. As to quaternary structure, homodimer. It depends on pyridoxal 5'-phosphate as a cofactor.

The protein localises to the cytoplasm. It participates in amino-acid biosynthesis; glycine biosynthesis; glycine from L-serine: step 1/1. Catalyzes the reversible interconversion of serine and glycine with a modified folate serving as the one-carbon carrier. Also exhibits a pteridine-independent aldolase activity toward beta-hydroxyamino acids, producing glycine and aldehydes, via a retro-aldol mechanism. This is Serine hydroxymethyltransferase from Saccharolobus islandicus (strain M.14.25 / Kamchatka #1) (Sulfolobus islandicus).